A 150-amino-acid chain; its full sequence is Triosephosphate isomerase (150 aa).

Residues asparagine 9 and lysine 11 each coordinate substrate. The active-site Electrophile is histidine 95.

The protein belongs to the triosephosphate isomerase family. Homodimer.

It is found in the cytoplasm. It catalyses the reaction D-glyceraldehyde 3-phosphate = dihydroxyacetone phosphate. Its pathway is carbohydrate biosynthesis; gluconeogenesis. It functions in the pathway carbohydrate degradation; glycolysis; D-glyceraldehyde 3-phosphate from glycerone phosphate: step 1/1. The polypeptide is Triosephosphate isomerase (tpiA) (Mycoplasmoides pirum (Mycoplasma pirum)).